The following is an 865-amino-acid chain: Alanine--tRNA ligase (865 aa).

The Zn(2+) site is built by His-554, His-558, Cys-656, and His-660.

Belongs to the class-II aminoacyl-tRNA synthetase family. It depends on Zn(2+) as a cofactor.

It is found in the cytoplasm. It carries out the reaction tRNA(Ala) + L-alanine + ATP = L-alanyl-tRNA(Ala) + AMP + diphosphate. In terms of biological role, catalyzes the attachment of alanine to tRNA(Ala) in a two-step reaction: alanine is first activated by ATP to form Ala-AMP and then transferred to the acceptor end of tRNA(Ala). Also edits incorrectly charged Ser-tRNA(Ala) and Gly-tRNA(Ala) via its editing domain. This is Alanine--tRNA ligase from Francisella tularensis subsp. mediasiatica (strain FSC147).